Here is a 397-residue protein sequence, read N- to C-terminus: METCNGLMRKNKRQKVSRNSDWSKLCPDVLRKIYETLRSPVDSHRAKIVCSNWYSVWKTCVKRPLCPLRIIHQGDSPTVGDGNRKLMGFSYNSYCMASSGNWLLMVDRCLKFYIYNLLTKERIDLPSMESKIRGGQVSFKSKSNNYNFGYLVGPSRKDDIVPYDYEAVEWKKSLAVLWVDETTGDYAVAWTFMRQYLFSYIKGDYSWCNLNHNGKSLVLFDMACENNKLYLLTMDHHIKIFNFYGDFLTGEQNLYPFNFVEDPSEYVWKRKIVIRRSGEVLIVLSLKKKVQNEEKLLFYIFKMNLESRKWERVYCIGDEMLIFGRGVTALALEDLDDGIKSNSIYFVGEDVWPDHQEHEHRVSNCGFFDIATSKIEWPKKIYCFINQNQWFVGGVAY.

Residues S20–L68 enclose the F-box domain.

The sequence is that of Putative F-box protein At2g04810 from Arabidopsis thaliana (Mouse-ear cress).